The chain runs to 22 residues: Protein YncP (22 aa).

This chain is Protein YncP, found in Escherichia coli (strain K12).